Reading from the N-terminus, the 172-residue chain is UPF0102 protein Pcryo_2198 (172 aa).

It belongs to the UPF0102 family.

The sequence is that of UPF0102 protein Pcryo_2198 from Psychrobacter cryohalolentis (strain ATCC BAA-1226 / DSM 17306 / VKM B-2378 / K5).